A 258-amino-acid polypeptide reads, in one-letter code: Dihydroorotate dehydrogenase B (NAD(+)), electron transfer subunit (258 aa).

Residues 2-100 (ILKENLTVVS…LGPQGNGFDL (99 aa)) form the FAD-binding FR-type domain. FAD is bound by residues 51-54 (RPIS), 68-70 (IYR), and 75-76 (GT). Residues Cys-220, Cys-225, Cys-228, and Cys-244 each coordinate [2Fe-2S] cluster.

Belongs to the PyrK family. Heterotetramer of 2 PyrK and 2 PyrD type B subunits. [2Fe-2S] cluster serves as cofactor. It depends on FAD as a cofactor.

The protein operates within pyrimidine metabolism; UMP biosynthesis via de novo pathway; orotate from (S)-dihydroorotate (NAD(+) route): step 1/1. Functionally, responsible for channeling the electrons from the oxidation of dihydroorotate from the FMN redox center in the PyrD type B subunit to the ultimate electron acceptor NAD(+). In Streptococcus mutans serotype c (strain ATCC 700610 / UA159), this protein is Dihydroorotate dehydrogenase B (NAD(+)), electron transfer subunit.